The primary structure comprises 415 residues: MADEGKEETGMGQVEEDFSVWKKNTPFLYDLLISHPLEWPSLTVHWVPSTPNPYVADSYFGVHKLILGTHTSGSAQDFLMVADVVTPTPNAEPGIGGANQDPFIPKVEIRQRIRVDGEVNRARCMPQKPTLVGAKTSGCEVFLFDYAKHAAKSQTSECDPDLRLVGHDKEGYGLSWSPFKEGYLLSGSQDQKICLWDVSATPQDKVLNAMFVYEGHESAIADVSWHMKNENLFGSAGEDGRLVIWDTRTNQMQHQVKVHEREVNYLSFNPFNEWVLATASSDSTVALFDLRKLNAPLHVMSSHEGEVFQVEWDPNHETVLASSGEDRRLMVWDLNRVGEEQLEIELDAEDGPPELLFSHGGHKAKISDFAWNKNEPWVIASVAEDNSLQVWQMAESIYRDEEDAEDIKEDITQQS.

5 WD repeats span residues 166–206, 215–255, 258–298, 302–342, and 361–401; these read GHDK…QDKV, GHES…MQHQ, VHER…APLH, SHEG…EEQL, and GHKA…YRDE. Positions 232 to 248 match the DWD box motif; the sequence is LFGSAGEDGRLVIWDTR.

Belongs to the WD repeat RBAP46/RBAP48/MSI1 family.

Its subcellular location is the nucleus. In terms of biological role, core histone-binding subunit that may target chromatin assembly factors, chromatin remodeling factors and histone deacetylases to their histone substrates in a manner that is regulated by nucleosomal DNA. This chain is WD-40 repeat-containing protein MSI2 (MSI2), found in Arabidopsis thaliana (Mouse-ear cress).